The sequence spans 356 residues: UDP-N-acetylglucosamine--N-acetylmuramyl-(pentapeptide) pyrophosphoryl-undecaprenol N-acetylglucosamine transferase (356 aa).

Residues 12-14 (TGG), Asn124, Arg163, Ser188, Ile242, 261-266 (ALTVCE), and Gln287 contribute to the UDP-N-acetyl-alpha-D-glucosamine site.

The protein belongs to the glycosyltransferase 28 family. MurG subfamily.

The protein resides in the cell inner membrane. The catalysed reaction is di-trans,octa-cis-undecaprenyl diphospho-N-acetyl-alpha-D-muramoyl-L-alanyl-D-glutamyl-meso-2,6-diaminopimeloyl-D-alanyl-D-alanine + UDP-N-acetyl-alpha-D-glucosamine = di-trans,octa-cis-undecaprenyl diphospho-[N-acetyl-alpha-D-glucosaminyl-(1-&gt;4)]-N-acetyl-alpha-D-muramoyl-L-alanyl-D-glutamyl-meso-2,6-diaminopimeloyl-D-alanyl-D-alanine + UDP + H(+). The protein operates within cell wall biogenesis; peptidoglycan biosynthesis. Cell wall formation. Catalyzes the transfer of a GlcNAc subunit on undecaprenyl-pyrophosphoryl-MurNAc-pentapeptide (lipid intermediate I) to form undecaprenyl-pyrophosphoryl-MurNAc-(pentapeptide)GlcNAc (lipid intermediate II). The sequence is that of UDP-N-acetylglucosamine--N-acetylmuramyl-(pentapeptide) pyrophosphoryl-undecaprenol N-acetylglucosamine transferase from Stutzerimonas stutzeri (strain A1501) (Pseudomonas stutzeri).